A 177-amino-acid chain; its full sequence is Ribonuclease H (177 aa).

The 142-residue stretch at 1-142 (MSKQVEIFTD…ADELAREGMA (142 aa)) folds into the RNase H type-1 domain. The Mg(2+) site is built by D10, E48, D70, and D134. The segment covering 126–138 (GHTENERADELAR) has biased composition (basic and acidic residues). The disordered stretch occupies residues 126-177 (GHTENERADELAREGMAPFKKGSFKPAASAPKPDAQLKQPVATKARRSTQSY).

The protein belongs to the RNase H family. As to quaternary structure, monomer. The cofactor is Mg(2+).

It localises to the cytoplasm. The catalysed reaction is Endonucleolytic cleavage to 5'-phosphomonoester.. Endonuclease that specifically degrades the RNA of RNA-DNA hybrids. In Mesorhizobium japonicum (strain LMG 29417 / CECT 9101 / MAFF 303099) (Mesorhizobium loti (strain MAFF 303099)), this protein is Ribonuclease H.